The primary structure comprises 324 residues: HSF-like protein (324 aa).

A signal peptide spans 1–19 (MNSLVALVLLGQIIGSTVS). 2 Cystatin fetuin-A-type domains span residues 21–130 (QLGP…VKCS) and 141–254 (RDCP…SDCV). 6 disulfide bridges follow: Cys-28–Cys-315, Cys-85–Cys-96, Cys-110–Cys-129, Cys-143–Cys-146, Cys-205–Cys-217, and Cys-230–Cys-253. An N-linked (GlcNAc...) asparagine glycan is attached at Asn-95. N-linked (GlcNAc...) asparagine glycosylation occurs at Asn-204. Asn-282 carries an N-linked (GlcNAc...) asparagine glycan.

Belongs to the fetuin family. Homodimer. In terms of tissue distribution, expressed by the liver.

It is found in the secreted. In terms of biological role, may not have antihemorrhagic activity. The polypeptide is HSF-like protein (Protobothrops flavoviridis (Habu)).